Consider the following 377-residue polypeptide: Succinyl-diaminopimelate desuccinylase (377 aa).

H67 provides a ligand contact to Zn(2+). D69 is an active-site residue. D100 contacts Zn(2+). The active-site Proton acceptor is the E134. Zn(2+) is bound by residues E135, E163, and H349.

It belongs to the peptidase M20A family. DapE subfamily. As to quaternary structure, homodimer. The cofactor is Zn(2+). Co(2+) is required as a cofactor.

It catalyses the reaction N-succinyl-(2S,6S)-2,6-diaminopimelate + H2O = (2S,6S)-2,6-diaminopimelate + succinate. It functions in the pathway amino-acid biosynthesis; L-lysine biosynthesis via DAP pathway; LL-2,6-diaminopimelate from (S)-tetrahydrodipicolinate (succinylase route): step 3/3. Catalyzes the hydrolysis of N-succinyl-L,L-diaminopimelic acid (SDAP), forming succinate and LL-2,6-diaminopimelate (DAP), an intermediate involved in the bacterial biosynthesis of lysine and meso-diaminopimelic acid, an essential component of bacterial cell walls. This chain is Succinyl-diaminopimelate desuccinylase, found in Shewanella frigidimarina (strain NCIMB 400).